The primary structure comprises 34 residues: Beta/mu-theraphotoxin-Pe1b (34 aa).

Cystine bridges form between cysteine 2–cysteine 16, cysteine 9–cysteine 21, and cysteine 15–cysteine 28.

It belongs to the neurotoxin 10 (Hwtx-1) family. 54 (ProTx-1) subfamily. In terms of tissue distribution, expressed by the venom gland.

The protein localises to the secreted. In terms of biological role, ion channel impairing toxin that inhibits several voltage-gated sodium channels. It acts by inhibiting the inward component of the sodium current and by shifting the voltage dependence of channel activation to more depolarized potentials. Its most potent activity is on Nav1.7/SCN9A (IC(50)=167 nM), followed by Nav1.6/SCN8A (IC(50)=696 nM), and Nav1.2/SCN2A (IC(50)=3.54 uM). The chain is Beta/mu-theraphotoxin-Pe1b from Phormingochilus everetti (Malaysian purple earth tiger tarantula).